Here is a 113-residue protein sequence, read N- to C-terminus: Cytochrome c55X (113 aa).

A signal peptide spans 1–26; the sequence is MTVARHAVSRLGLALASFLLFPLALA. 3 residues coordinate heme c: Cys-45, Cys-48, and His-49.

Binds 1 heme c group covalently per subunit.

It is found in the periplasm. Monoheme c-type cytochrome. In Stutzerimonas stutzeri (Pseudomonas stutzeri), this protein is Cytochrome c55X (nirC).